Reading from the N-terminus, the 272-residue chain is MGTLTTSLVVPSKLNNEQQSSIFIHKTRRKCKKNQSIVPVARLFGPAIFEASKLKVLFLGVDEEKHPGKLPRTYTLTHSDITSKLTLAISQTINNSQLQGWYNRLQRDEVVAEWKKVKGKMSLHVHCHISGGHFMLDLFARLRNYIFCKELPVVLKAFVHGDENLLRNYPELQEALVWVYFHSNIQEFNKVECWGPLRDATSPSSSSGGVGGVKSTSFTSNSNKKWELPKPCEEACACCFPPVSVMPWLSSNLDGVGEENGTIQQGLQEQQS.

The N-terminal 50 residues, Met-1–Glu-50, are a transit peptide targeting the chloroplast. The disordered stretch occupies residues Thr-201 to Ser-222.

This sequence belongs to the staygreen family. As to quaternary structure, interacts with PSY1.

Its subcellular location is the plastid. It localises to the chloroplast. Functionally, required to trigger chlorophyll degradation during leaf senescence and fruit ripening. Binds directly PSY1 to regulate the accumulation of lycopene and beta-carotene in the maturing fruits. The chain is Protein STAY-GREEN 1, chloroplastic from Solanum lycopersicum (Tomato).